A 158-amino-acid chain; its full sequence is Transcription elongation factor GreA (158 aa).

Residues 48-74 adopt a coiled-coil conformation; that stretch reads EYDAAKNRQGFIEGRIKELNDKIARAE.

This sequence belongs to the GreA/GreB family.

In terms of biological role, necessary for efficient RNA polymerase transcription elongation past template-encoded arresting sites. The arresting sites in DNA have the property of trapping a certain fraction of elongating RNA polymerases that pass through, resulting in locked ternary complexes. Cleavage of the nascent transcript by cleavage factors such as GreA or GreB allows the resumption of elongation from the new 3'terminus. GreA releases sequences of 2 to 3 nucleotides. The polypeptide is Transcription elongation factor GreA (Syntrophotalea carbinolica (strain DSM 2380 / NBRC 103641 / GraBd1) (Pelobacter carbinolicus)).